We begin with the raw amino-acid sequence, 269 residues long: Pyrroline-5-carboxylate reductase (269 aa).

It belongs to the pyrroline-5-carboxylate reductase family.

The protein resides in the cytoplasm. It carries out the reaction L-proline + NADP(+) = (S)-1-pyrroline-5-carboxylate + NADPH + 2 H(+). It catalyses the reaction L-proline + NAD(+) = (S)-1-pyrroline-5-carboxylate + NADH + 2 H(+). It functions in the pathway amino-acid biosynthesis; L-proline biosynthesis; L-proline from L-glutamate 5-semialdehyde: step 1/1. Inhibited by p-chloromercuribenzoate. In terms of biological role, catalyzes the reduction of 1-pyrroline-5-carboxylate (PCA) to L-proline. Does not catalyze the reverse reaction. This chain is Pyrroline-5-carboxylate reductase, found in Escherichia coli (strain K12).